A 590-amino-acid polypeptide reads, in one-letter code: MATIVASKEFTGNPRRQLAKLFDVSLKLTVPDEPNVEPLIEPGKFGDYQCNNAMGLWSLIKGKGTQFRGPPAVGQALIQSLPTSEMVESCSIAGPGFVNVVLSSKWMAKSIENMLVDGIDTWAPTLSVKRAVVDFSSPNIAKEMHVGHLRSTIIGDTLARMLEYSKVEVLRRNHVGDWGTQFGMLIEFLFEKFPDTESVTETAIGDLQVFYRESKLKFDLNPEFKEKAQQAVVRLQGGDPVYRQAWAKICEISRNEFAKVYKRLRIELEEKGESFYNPYIANVIEELSSKGLVEESKGARVIFIEGFKIPLIVVKSDGGFNYASTDLTALWYRLNEEKAEWIIYVTDVGQQQHFDMFFKAARKAGWLPDDDKTYPRVSHVGFGLVLGDDNKRFRTRAAEVVRLADLLDEAKDRSKAALIERGKDKEWSPEELDQIAEAVGYGALKYADLKTNRITGYTFSFDQMLNDKGDTAVYLLYAHARICSIIRKSGKDIDELKKTGKIALDHAAERALGLHLLQFAETVEEACTTLLPNVLCKYLYYLSEEFTKFYSNCQVNGSAEETSRLLLCEATAIVMRKCFHLLGITPVYKL.

At A2 the chain carries N-acetylalanine. Residues 137 to 139 (SPN), H148, Y322, D326, and Q350 contribute to the L-arginine site. A 'HIGH' region motif is present at residues 138–149 (PNIAKEMHVGHL). Positions 470–484 (DTAVYLLYAHARICS) are interaction with tRNA.

This sequence belongs to the class-I aminoacyl-tRNA synthetase family.

Its subcellular location is the cytoplasm. The protein localises to the cytosol. The catalysed reaction is tRNA(Arg) + L-arginine + ATP = L-arginyl-tRNA(Arg) + AMP + diphosphate. Its function is as follows. Forms part of a macromolecular complex that catalyzes the attachment of specific amino acids to cognate tRNAs during protein synthesis. This is Arginine--tRNA ligase, cytoplasmic from Arabidopsis thaliana (Mouse-ear cress).